Here is a 108-residue protein sequence, read N- to C-terminus: MVLQRIFRLSSVLRSAVSVHLKRNIGVTAVAFNKELDPVQKLFVDKIREYKSKRQASGGPVDIGPEYQQDLDRELYKLKQMYGKGEMDTFPTFKFDDPKFEVIDKPQS.

The transit peptide at 1–32 (MVLQRIFRLSSVLRSAVSVHLKRNIGVTAVAF) directs the protein to the mitochondrion. 3 positions are modified to N6-acetyllysine: Lys-41, Lys-46, and Lys-79. N6-acetyllysine; alternate occurs at positions 84, 94, and 99. N6-succinyllysine; alternate is present on residues Lys-84, Lys-94, and Lys-99. Lys-105 carries the post-translational modification N6-acetyllysine. Ser-108 is subject to Phosphoserine.

This sequence belongs to the eukaryotic ATPase subunit F6 family. Component of the ATP synthase complex composed at least of ATP5F1A/subunit alpha, ATP5F1B/subunit beta, ATP5MC1/subunit c (homooctomer), MT-ATP6/subunit a, MT-ATP8/subunit 8, ATP5ME/subunit e, ATP5MF/subunit f, ATP5MG/subunit g, ATP5MK/subunit k, ATP5MJ/subunit j, ATP5F1C/subunit gamma, ATP5F1D/subunit delta, ATP5F1E/subunit epsilon, ATP5PF/subunit F6, ATP5PB/subunit b, ATP5PD/subunit d, ATP5PO/subunit OSCP. ATP synthase complex consists of a soluble F(1) head domain (subunits alpha(3) and beta(3)) - the catalytic core - and a membrane F(0) domain - the membrane proton channel (subunits c, a, 8, e, f, g, k and j). These two domains are linked by a central stalk (subunits gamma, delta, and epsilon) rotating inside the F1 region and a stationary peripheral stalk (subunits F6, b, d, and OSCP).

Its subcellular location is the mitochondrion. It localises to the mitochondrion inner membrane. In terms of biological role, subunit F6, of the mitochondrial membrane ATP synthase complex (F(1)F(0) ATP synthase or Complex V) that produces ATP from ADP in the presence of a proton gradient across the membrane which is generated by electron transport complexes of the respiratory chain. ATP synthase complex consist of a soluble F(1) head domain - the catalytic core - and a membrane F(1) domain - the membrane proton channel. These two domains are linked by a central stalk rotating inside the F(1) region and a stationary peripheral stalk. During catalysis, ATP synthesis in the catalytic domain of F(1) is coupled via a rotary mechanism of the central stalk subunits to proton translocation. In vivo, can only synthesize ATP although its ATP hydrolase activity can be activated artificially in vitro. Part of the complex F(0) domain. Part of the complex F(0) domain and the peripheric stalk, which acts as a stator to hold the catalytic alpha(3)beta(3) subcomplex and subunit a/ATP6 static relative to the rotary elements. This Mus musculus (Mouse) protein is ATP synthase peripheral stalk subunit F6, mitochondrial.